The following is a 1405-amino-acid chain: DNA-directed RNA polymerase subunit beta' (1405 aa).

Residues C70, C72, C85, and C88 each contribute to the Zn(2+) site. Mg(2+) is bound by residues D460, D462, and D464. Residues C815, C890, C897, and C900 each coordinate Zn(2+).

The protein belongs to the RNA polymerase beta' chain family. As to quaternary structure, the RNAP catalytic core consists of 2 alpha, 1 beta, 1 beta' and 1 omega subunit. When a sigma factor is associated with the core the holoenzyme is formed, which can initiate transcription. Mg(2+) is required as a cofactor. The cofactor is Zn(2+).

The enzyme catalyses RNA(n) + a ribonucleoside 5'-triphosphate = RNA(n+1) + diphosphate. Functionally, DNA-dependent RNA polymerase catalyzes the transcription of DNA into RNA using the four ribonucleoside triphosphates as substrates. In Xanthomonas campestris pv. campestris (strain 8004), this protein is DNA-directed RNA polymerase subunit beta'.